Reading from the N-terminus, the 56-residue chain is MGHANIWYSHPRKYGQGSRSCRACSNRHGLIRKYGLNICRQCFREYANDIGFKKLD.

4 residues coordinate Zn(2+): cysteine 21, cysteine 24, cysteine 39, and cysteine 42.

Belongs to the universal ribosomal protein uS14 family. In terms of assembly, component of the 40S small ribosomal subunit. It depends on Zn(2+) as a cofactor.

The protein resides in the cytoplasm. Its subcellular location is the cytosol. It is found in the rough endoplasmic reticulum. The chain is Small ribosomal subunit protein uS14 (RpS29) from Plutella xylostella (Diamondback moth).